Here is a 238-residue protein sequence, read N- to C-terminus: Oxidoreductase dmxR7 (238 aa).

This sequence belongs to the avfA family.

It functions in the pathway secondary metabolite biosynthesis. In terms of biological role, oxidoreductase; part of the gene cluster that mediates the biosynthesis of the dimeric xanthones cryptosporioptides. The pathway begins with the synthesis of atrochrysone thioester by the polyketide synthase dmx-nrPKS. The atrochrysone carboxyl ACP thioesterase dmxR1 then breaks the thioester bond and releases the atrochrysone carboxylic acid from dmx-nrPKS. Atrochrysone carboxylic acid is decarboxylated by the decarboxylase dmxR15, and oxidized by the anthrone oxygenase dmxR16 to yield emodin. Emodin is then reduced to emodin hydroquinone by the oxidoreductase dmxR7. A-ring reduction by the short chain dehydrogenase dmxR18, dehydration by the scytalone dehydratase-like protein dmxR17 and probable spontaneous re-oxidation, results in overall deoxygenation to chrysophanol. Baeyer-Villiger oxidation by the Baeyer-Villiger monooxygenase (BVMO) dmxR6 then yields monodictylactone in equilibrium with monodictyphenone. In the case of the cryptosporioptides biosynthesis, monodictylactone is reduced at C-12 to an alcohol (by the short chain dehydrogenases dmxR12 or dmxR8) and hydroxylated at C-5 by dmxR9, yielding the electron-rich aromatic which could eliminate H(2)O to form the ortho-quinonemethide, followed by tautomerisation to paraquinone and complete the formal reduction to produce the 10-methylgroup. Conjugate addition of C-4a-OH to the resulting paraquinone by the monooxygenase dmxR10 then gives cyclohexadienone, which is then reduced at C-5 by the short chain dehydrogenase dmxR3 to give the dihydroxanthone. The 6,7-epoxide in the cryptosporioptides could be introduced by the cytochrome P450 monooxygenase dmxL3. The highly reducing PKS dmxL2 manufactures butyrate, which is further carboxylated by dmxL1 to form ethylmalonate. It is not yet clear whether the carboxylation occurs while the butyrate is attached to the ACP of dmxL2, but this unusual fungal metabolite could then be esterified to O-5 by the O-acetyltransferase dmxR13. Finally, dimerization performed by dmxR5 gives the observed dimers cryptosporioptides A, B and C as the final products of the pathway. The chain is Oxidoreductase dmxR7 from Cryptosporiopsis sp. (strain 8999).